The sequence spans 307 residues: Non-homologous end joining protein Ku (307 aa).

One can recognise a Ku domain in the interval 11 to 179 (LSFGLVSIPV…EVRSMKDLNI (169 aa)). Low complexity-rich tracts occupy residues 257 to 267 (RGGAKAKPAAA) and 290 to 307 (ARAP…RARK). The segment at 257–307 (RGGAKAKPAAAPRRKAPEPVAGMAEATRARKPAARAPKSPAEAPAKVRARK) is disordered.

The protein belongs to the prokaryotic Ku family. In terms of assembly, homodimer. Interacts with LigD.

With LigD forms a non-homologous end joining (NHEJ) DNA repair enzyme, which repairs dsDNA breaks with reduced fidelity. Binds linear dsDNA with 5'- and 3'- overhangs but not closed circular dsDNA nor ssDNA. Recruits and stimulates the ligase activity of LigD. The chain is Non-homologous end joining protein Ku from Paraburkholderia phymatum (strain DSM 17167 / CIP 108236 / LMG 21445 / STM815) (Burkholderia phymatum).